We begin with the raw amino-acid sequence, 397 residues long: Pyridinium-3,5-bisthiocarboxylic acid mononucleotide nickel insertion protein (397 aa).

The protein belongs to the LarC family.

The enzyme catalyses Ni(II)-pyridinium-3,5-bisthiocarboxylate mononucleotide = pyridinium-3,5-bisthiocarboxylate mononucleotide + Ni(2+). In terms of biological role, involved in the biosynthesis of a nickel-pincer cofactor ((SCS)Ni(II) pincer complex). Binds Ni(2+), and functions in nickel delivery to pyridinium-3,5-bisthiocarboxylic acid mononucleotide (P2TMN), to form the mature cofactor. Is thus probably required for the activation of nickel-pincer cofactor-dependent enzymes. In Thermotoga petrophila (strain ATCC BAA-488 / DSM 13995 / JCM 10881 / RKU-1), this protein is Pyridinium-3,5-bisthiocarboxylic acid mononucleotide nickel insertion protein.